A 432-amino-acid polypeptide reads, in one-letter code: ATP-dependent RNA helicase RhlB (432 aa).

Residues 9–37 carry the Q motif motif; that stretch reads QNFADLGLQPQVIDGLNAKGFIKCTPIQA. The region spanning 40-219 is the Helicase ATP-binding domain; that stretch reads LPVLLAGQDI…FEHMQEPEHV (180 aa). Residue 53-60 coordinates ATP; sequence AQTGTGKT. The DEAD box signature appears at 165-168; sequence DEAD. Positions 245–390 constitute a Helicase C-terminal domain; it reads ALLQTLIEEE…QSDYDASALL (146 aa). Residues 397–432 form a disordered region; that stretch reads LRLQRRPQQNRRNNNGQRQGGNRKHSRPRQPRNTQS. The span at 417 to 426 shows a compositional bias: basic residues; sequence GNRKHSRPRQ.

It belongs to the DEAD box helicase family. RhlB subfamily. In terms of assembly, component of the RNA degradosome, which is a multiprotein complex involved in RNA processing and mRNA degradation.

The protein resides in the cytoplasm. It carries out the reaction ATP + H2O = ADP + phosphate + H(+). DEAD-box RNA helicase involved in RNA degradation. Has RNA-dependent ATPase activity and unwinds double-stranded RNA. The sequence is that of ATP-dependent RNA helicase RhlB from Aliivibrio fischeri (strain MJ11) (Vibrio fischeri).